A 226-amino-acid chain; its full sequence is UPF0173 metal-dependent hydrolase Tpet_1587 (226 aa).

This sequence belongs to the UPF0173 family.

In Thermotoga petrophila (strain ATCC BAA-488 / DSM 13995 / JCM 10881 / RKU-1), this protein is UPF0173 metal-dependent hydrolase Tpet_1587.